Consider the following 383-residue polypeptide: MKNICLLGATGSIGEQTLDVLRMHQDQFRLVSMTFGKNAEKAIPLIRTFQPKYIAVGDMDTYQKVKEASFSHECQIGIGEEGLIEAAVMDEVDIVVNALLGSVGLIPTLKAIEQKKTIALANKETLVTAGHIVKGHAKRYGVPLLPVDSEHSAIFQALQGEQCKNIERLVITASGGSFRDKTRQELESVTIADALNHPNWSMGAKITIDSATMMNKGLEVIEAHWLFDIPYEQIDVVLHKESIIHSMVEFHDRSVIAQLGNPDMRVPIQYALTYPDRLPLPETKRLELWEIGSLHFAKADFERFRCLQFAFESGKIGGTMPTVLNAANEEAVAAFLAGRISFLSIEDLIEQALDRHSVIQDPSLADIQEVDKDTRGYVNSILT.

Residues T10, G11, S12, I13, G36, K37, N38, and N122 each coordinate NADPH. 1-deoxy-D-xylulose 5-phosphate is bound at residue K123. E124 lines the NADPH pocket. Mn(2+) is bound at residue D148. Residues S149, E150, S174, and H197 each contribute to the 1-deoxy-D-xylulose 5-phosphate site. Position 150 (E150) interacts with Mn(2+). Residue G203 participates in NADPH binding. Residues S210, N215, K216, and E219 each contribute to the 1-deoxy-D-xylulose 5-phosphate site. Residue E219 coordinates Mn(2+).

Belongs to the DXR family. It depends on Mg(2+) as a cofactor. Mn(2+) is required as a cofactor.

It catalyses the reaction 2-C-methyl-D-erythritol 4-phosphate + NADP(+) = 1-deoxy-D-xylulose 5-phosphate + NADPH + H(+). It functions in the pathway isoprenoid biosynthesis; isopentenyl diphosphate biosynthesis via DXP pathway; isopentenyl diphosphate from 1-deoxy-D-xylulose 5-phosphate: step 1/6. Functionally, catalyzes the NADPH-dependent rearrangement and reduction of 1-deoxy-D-xylulose-5-phosphate (DXP) to 2-C-methyl-D-erythritol 4-phosphate (MEP). In Bacillus velezensis (strain DSM 23117 / BGSC 10A6 / LMG 26770 / FZB42) (Bacillus amyloliquefaciens subsp. plantarum), this protein is 1-deoxy-D-xylulose 5-phosphate reductoisomerase.